A 359-amino-acid polypeptide reads, in one-letter code: MIALPQDRMDQLLKRFSMIESQMANNPDSDTYVKLASEYSELQDVVGKIRELSDARMEASDLAAMRDDASTDAEMRALAVEELPEVEKRIAVLEQDVQILLLPKDAADDKNAILEIRAGTGGLEATLFAGDLFRMYERYAAEKGWRVELVSASEGDAGGYKEIIATVSGKGVFSKLKFESGVHRVQRVPETEAGGRIHTSAATVAVLPEAEDIDIEIRNEDIRIDTMRASGAGGQHVNTTDSAVRITHIPTGIMVVQAEKSQHQNRARAMQILRARLYDMERQKAESERSQARRSQVGSGDRSERIRTYNFPQGRVTDHRINLTLYKLDRVMEGDLDELVDALISDHQTALLAELGEQP.

Gln235 bears the N5-methylglutamine mark. The interval 283–309 (QKAESERSQARRSQVGSGDRSERIRTY) is disordered.

This sequence belongs to the prokaryotic/mitochondrial release factor family. Methylated by PrmC. Methylation increases the termination efficiency of RF1.

The protein resides in the cytoplasm. Peptide chain release factor 1 directs the termination of translation in response to the peptide chain termination codons UAG and UAA. This Brucella abortus (strain S19) protein is Peptide chain release factor 1.